A 476-amino-acid chain; its full sequence is Aspartyl/glutamyl-tRNA(Asn/Gln) amidotransferase subunit B (476 aa).

The protein belongs to the GatB/GatE family. GatB subfamily. As to quaternary structure, heterotrimer of A, B and C subunits.

It catalyses the reaction L-glutamyl-tRNA(Gln) + L-glutamine + ATP + H2O = L-glutaminyl-tRNA(Gln) + L-glutamate + ADP + phosphate + H(+). The catalysed reaction is L-aspartyl-tRNA(Asn) + L-glutamine + ATP + H2O = L-asparaginyl-tRNA(Asn) + L-glutamate + ADP + phosphate + 2 H(+). Its function is as follows. Allows the formation of correctly charged Asn-tRNA(Asn) or Gln-tRNA(Gln) through the transamidation of misacylated Asp-tRNA(Asn) or Glu-tRNA(Gln) in organisms which lack either or both of asparaginyl-tRNA or glutaminyl-tRNA synthetases. The reaction takes place in the presence of glutamine and ATP through an activated phospho-Asp-tRNA(Asn) or phospho-Glu-tRNA(Gln). In Clostridium botulinum (strain Alaska E43 / Type E3), this protein is Aspartyl/glutamyl-tRNA(Asn/Gln) amidotransferase subunit B.